Consider the following 488-residue polypeptide: Centrosomal protein cep57l1 (488 aa).

Positions Leu71–Asn226 form a coiled coil. Disordered regions lie at residues Ser232 to Lys272 and Pro311 to Ser342. A compositionally biased stretch (basic residues) spans Arg241–Lys250. 2 stretches are compositionally biased toward basic and acidic residues: residues Pro259 to Pro270 and Ser314 to Pro325. Positions Lys377–Ile403 form a coiled coil. The tract at residues Leu416 to Ala464 is disordered. Residues Asn452–Ala464 are compositionally biased toward polar residues.

This sequence belongs to the translokin family. In terms of assembly, interacts with clip1, mis12, ndc80 and zwint. Interacts with gamma-tubulin.

The protein resides in the cytoplasm. It localises to the cytoskeleton. It is found in the microtubule organizing center. The protein localises to the centrosome. Its subcellular location is the chromosome. The protein resides in the centromere. It localises to the kinetochore. It is found in the spindle. Its function is as follows. Required for spindle microtubule attachment to both kinetochores and centrosomes. Also functions to tether minus-ends of spindle microtubules to centrosomes. May act by forming ring-like structures around microtubules, or by serving as a cross-linker or scaffold at the attachment site. This Xenopus laevis (African clawed frog) protein is Centrosomal protein cep57l1 (cep57l1).